A 175-amino-acid chain; its full sequence is D-glycero-beta-D-manno-heptose-1,7-bisphosphate 7-phosphatase (175 aa).

D7 (nucleophile) is an active-site residue. D7 and D9 together coordinate Mg(2+). Substrate contacts are provided by residues 7–9, 15–19, and 50–53; these read DRD, DSDAY, and TNQS. The active-site Proton donor is the D9. Positions 89, 91, 97, and 99 each coordinate Zn(2+). 100-101 contacts substrate; the sequence is RK. Mg(2+) is bound at residue D126.

Belongs to the gmhB family. As to quaternary structure, monomer. Mg(2+) is required as a cofactor. It depends on Zn(2+) as a cofactor.

The protein resides in the cytoplasm. The enzyme catalyses D-glycero-beta-D-manno-heptose 1,7-bisphosphate + H2O = D-glycero-beta-D-manno-heptose 1-phosphate + phosphate. The protein operates within nucleotide-sugar biosynthesis; ADP-L-glycero-beta-D-manno-heptose biosynthesis; ADP-L-glycero-beta-D-manno-heptose from D-glycero-beta-D-manno-heptose 7-phosphate: step 2/4. Its pathway is bacterial outer membrane biogenesis; LPS core biosynthesis. Its function is as follows. Converts the D-glycero-beta-D-manno-heptose 1,7-bisphosphate (beta-HBP) intermediate into D-glycero-beta-D-manno-heptose 1-phosphate by removing the phosphate group at the C-7 position. The protein is D-glycero-beta-D-manno-heptose-1,7-bisphosphate 7-phosphatase of Pseudomonas putida (strain ATCC 47054 / DSM 6125 / CFBP 8728 / NCIMB 11950 / KT2440).